Here is a 94-residue protein sequence, read N- to C-terminus: Aspartyl/glutamyl-tRNA(Asn/Gln) amidotransferase subunit C (94 aa).

The protein belongs to the GatC family. In terms of assembly, heterotrimer of A, B and C subunits.

The catalysed reaction is L-glutamyl-tRNA(Gln) + L-glutamine + ATP + H2O = L-glutaminyl-tRNA(Gln) + L-glutamate + ADP + phosphate + H(+). It catalyses the reaction L-aspartyl-tRNA(Asn) + L-glutamine + ATP + H2O = L-asparaginyl-tRNA(Asn) + L-glutamate + ADP + phosphate + 2 H(+). In terms of biological role, allows the formation of correctly charged Asn-tRNA(Asn) or Gln-tRNA(Gln) through the transamidation of misacylated Asp-tRNA(Asn) or Glu-tRNA(Gln) in organisms which lack either or both of asparaginyl-tRNA or glutaminyl-tRNA synthetases. The reaction takes place in the presence of glutamine and ATP through an activated phospho-Asp-tRNA(Asn) or phospho-Glu-tRNA(Gln). This chain is Aspartyl/glutamyl-tRNA(Asn/Gln) amidotransferase subunit C, found in Caldicellulosiruptor saccharolyticus (strain ATCC 43494 / DSM 8903 / Tp8T 6331).